Consider the following 363-residue polypeptide: 3-isopropylmalate dehydrogenase (363 aa).

Position 78–91 (78–91 (GPKWEHLPPDQQPE)) interacts with NAD(+). Positions 99, 109, 138, and 227 each coordinate substrate. Mg(2+) is bound by residues D227, D251, and D255. 285 to 297 (GSAPDITGKNIAN) contacts NAD(+).

Belongs to the isocitrate and isopropylmalate dehydrogenases family. LeuB type 1 subfamily. In terms of assembly, homodimer. Mg(2+) serves as cofactor. Requires Mn(2+) as cofactor.

The protein localises to the cytoplasm. It carries out the reaction (2R,3S)-3-isopropylmalate + NAD(+) = 4-methyl-2-oxopentanoate + CO2 + NADH. It participates in amino-acid biosynthesis; L-leucine biosynthesis; L-leucine from 3-methyl-2-oxobutanoate: step 3/4. In terms of biological role, catalyzes the oxidation of 3-carboxy-2-hydroxy-4-methylpentanoate (3-isopropylmalate) to 3-carboxy-4-methyl-2-oxopentanoate. The product decarboxylates to 4-methyl-2 oxopentanoate. This chain is 3-isopropylmalate dehydrogenase, found in Shigella boydii serotype 4 (strain Sb227).